The chain runs to 360 residues: Arginase, non-hepatic 3 (360 aa).

Positions 122, 145, 147, and 149 each coordinate Mn(2+). Substrate is bound by residues 147–151 (HADIN), 158–160 (SGN), and D204. Residues D253 and D255 each coordinate Mn(2+). The substrate site is built by T267 and E298.

Belongs to the arginase family. As to quaternary structure, homotrimer. Mn(2+) serves as cofactor. Expressed at differing tadpole stages in tail, intestine, hindlimb and trunk region. Strongest in tadpole tail.

The enzyme catalyses L-arginine + H2O = urea + L-ornithine. It participates in nitrogen metabolism; urea cycle; L-ornithine and urea from L-arginine: step 1/1. As well as its role in the urea cycle, may be involved in tissue remodeling. This is Arginase, non-hepatic 3 (arg2-c) from Xenopus laevis (African clawed frog).